The chain runs to 473 residues: Glutamate--tRNA ligase (473 aa).

Positions Pro-11 to Gly-21 match the 'HIGH' region motif. The 'KMSKS' region motif lies at Lys-240–Arg-244. Lys-243 provides a ligand contact to ATP.

The protein belongs to the class-I aminoacyl-tRNA synthetase family. Glutamate--tRNA ligase type 1 subfamily. As to quaternary structure, monomer.

The protein localises to the cytoplasm. The catalysed reaction is tRNA(Glu) + L-glutamate + ATP = L-glutamyl-tRNA(Glu) + AMP + diphosphate. Its function is as follows. Catalyzes the attachment of glutamate to tRNA(Glu) in a two-step reaction: glutamate is first activated by ATP to form Glu-AMP and then transferred to the acceptor end of tRNA(Glu). This Rhodopseudomonas palustris (strain TIE-1) protein is Glutamate--tRNA ligase.